Reading from the N-terminus, the 405-residue chain is Phosphopentomutase (405 aa).

Asp-10, Asp-303, His-308, Asp-344, His-345, and His-356 together coordinate Mn(2+).

Belongs to the phosphopentomutase family. It depends on Mn(2+) as a cofactor.

The protein resides in the cytoplasm. It catalyses the reaction 2-deoxy-alpha-D-ribose 1-phosphate = 2-deoxy-D-ribose 5-phosphate. The enzyme catalyses alpha-D-ribose 1-phosphate = D-ribose 5-phosphate. It functions in the pathway carbohydrate degradation; 2-deoxy-D-ribose 1-phosphate degradation; D-glyceraldehyde 3-phosphate and acetaldehyde from 2-deoxy-alpha-D-ribose 1-phosphate: step 1/2. Functionally, isomerase that catalyzes the conversion of deoxy-ribose 1-phosphate (dRib-1-P) and ribose 1-phosphate (Rib-1-P) to deoxy-ribose 5-phosphate (dRib-5-P) and ribose 5-phosphate (Rib-5-P), respectively. In Shewanella woodyi (strain ATCC 51908 / MS32), this protein is Phosphopentomutase.